The following is a 347-amino-acid chain: Protein YIPF3 (347 aa).

Residues 1–31 (MATPAAPASGVRNGAGPEWGGFEENIQGGGS) are disordered. Position 2 is an N-acetylalanine; in Protein YIPF3, N-terminally processed (alanine 2). Residues 2 to 145 (ATPAAPASGV…PIKMVNFPQK (144 aa)) are Cytoplasmic-facing. A helical membrane pass occupies residues 146-166 (VAGELYGPLMLVFTLVAILLH). Residues 167–184 (GMKTSDTIIREGTLMGTA) lie on the Lumenal side of the membrane. Residues 185–205 (IGTCFGYWLGVSSFIYFLAYL) traverse the membrane as a helical segment. Over 206–211 (CNAQIT) the chain is Cytoplasmic. Residues 212-234 (MLQMLALLGYGLFGHCIVLFITY) form a helical membrane-spanning segment. At 235–237 (NIH) the chain is on the lumenal side. The helical transmembrane segment at 238–260 (LHALFYLFWLLVGGLSTLRMVAV) threads the bilayer. Over 261-271 (LVSRTVGPTQR) the chain is Cytoplasmic. The chain crosses the membrane as a helical span at residues 272–292 (LLLCGTLAALHMLFLLYLHFA). Residues 293 to 347 (YHKVVEGILDTLEGPNIPPMQRVPRDIPAVLPAARLPVAVINATAKAIAVTLQSH) lie on the Lumenal side of the membrane. A glycan (N-linked (GlcNAc...) asparagine) is linked at asparagine 334.

The protein belongs to the YIP1 family. In terms of assembly, interacts with YIPF4 and YIPF5. Expressed by splenocytes (at protein level).

The protein localises to the cell membrane. It localises to the golgi apparatus. It is found in the cis-Golgi network membrane. Its subcellular location is the cytoplasm. Its function is as follows. Involved in the maintenance of the Golgi structure. May play a role in hematopoiesis. The sequence is that of Protein YIPF3 (Yipf3) from Mus musculus (Mouse).